A 496-amino-acid polypeptide reads, in one-letter code: Ribose import ATP-binding protein RbsA (496 aa).

2 consecutive ABC transporter domains span residues 3–239 (IVME…VGRE) and 246–493 (ERTP…TGGN). An ATP-binding site is contributed by 35 to 42 (GENGAGKS).

It belongs to the ABC transporter superfamily. Ribose importer (TC 3.A.1.2.1) family. The complex is composed of an ATP-binding protein (RbsA), two transmembrane proteins (RbsC) and a solute-binding protein (RbsB).

The protein localises to the cell membrane. The enzyme catalyses D-ribose(out) + ATP + H2O = D-ribose(in) + ADP + phosphate + H(+). Its function is as follows. Part of the ABC transporter complex RbsABC involved in ribose import. Responsible for energy coupling to the transport system. The sequence is that of Ribose import ATP-binding protein RbsA from Oceanobacillus iheyensis (strain DSM 14371 / CIP 107618 / JCM 11309 / KCTC 3954 / HTE831).